The following is a 1001-amino-acid chain: ATP-dependent DNA/RNA helicase DHX36 (1001 aa).

A required for recruitment to cytoplasmic stress granules region spans residues 1-44 (MSYDYHQSWSRDGGPRGSGQGSSGGGGGGSRGSGGGGGGRGGRG). Positions 1–54 (MSYDYHQSWSRDGGPRGSGQGSSGGGGGGSRGSGGGGGGRGGRGRHPAHLKGRE) are disordered. The tract at residues 1-97 (MSYDYHQSWS…IVQLLNSVQA (97 aa)) is required for the pre-miR-134 transport. The tract at residues 1–193 (MSYDYHQSWS…KKTDPRYIEM (193 aa)) is necessary for nuclear and nucleolar caps localizations. Gly residues predominate over residues 15–41 (PRGSGQGSSGGGGGGSRGSGGGGGGRG). The interval 46-68 (HPAHLKGREIGLWYAKKQTQKNK) is DSM (DHX36-specific motif). Residues 46–98 (HPAHLKGREIGLWYAKKQTQKNKEAERQERAVVHMDERREEQIVQLLNSVQAK) are required for G4-DNA- and G4-RNA-binding. RecA-like domain regions lie at residues 99–379 (TDKD…MIHI) and 380–621 (PGFT…DYQL). The stretch at 120–147 (EVSSEKKINSEKKLDNQEKKLLNQEKKT) forms a coiled coil. Serine 154 bears the Phosphoserine mark. A Helicase ATP-binding domain is found at 210 to 380 (VNLINNHQVT…FGNCPMIHIP (171 aa)). Position 226–231 (226–231 (GCGKTT)) interacts with ATP. Residues 258–310 (RRISAISVAERVATERAESCGNGNSTGYQIRLQSRLPRKQGSILYCTTGIILQ) form a necessary for interaction with single-stranded DNA at the 3'-end of the G4-DNA structure region. The DEAH box signature appears at 327-330 (DEIH). 2 residues coordinate Mg(2+): glutamate 328 and histidine 330. In terms of domain architecture, Helicase C-terminal spans 470-640 (ALIRYIVLEE…ELCLQIKILR (171 aa)). Residues 491–550 (WDNISTLHDLLMSQVMFKSDKFLIIPLHSLMPTVNQTQVFKKTPPGVRKIVIATNIAETS) form a necessary for interaction with single-stranded DNA at the 3'-end of the G4-DNA structure region. Residues 510 to 521 (DKFLIIPLHSLM) carry the Nuclear localization signal motif. Residues serine 550 and 595-598 (RAGR) contribute to the ATP site. Residues 622 to 691 (PEILRTPLEE…LGVHLARLPV (70 aa)) form a WH domain region. 3 necessary for interaction with single-stranded DNA at the 3'-end of the G4-DNA structure regions span residues 631–690 (ELCL…ARLP), 842–853 (NLGKKRKMVKVH), and 863–893 (HPKS…IYLY). The interval 834–898 (PKVAKIRLNL…SIYLYDCTEV (65 aa)) is OB-fold-like subdomains. An N6-acetyllysine modification is found at lysine 940. At serine 956 the chain carries Phosphoserine.

Belongs to the DEAD box helicase family. DEAH subfamily. Found in a multi-helicase-TICAM1 complex at least composed of DHX36, DDX1, DDX21 and TICAM1; this complex exists in resting cells with or without dsRNA poly(I:C) ligand stimulation. Interacts (via C-terminus) with TICAM1 (via TIR domain). Interacts (via C-terminus) with DDX21; this interaction serves as bridges to TICAM1. Interacts with TERT; this interaction is dependent on the ability of DHX36 to bind to the G-quadruplex RNA (G4-RNA) structure present in the telomerase RNA template component (TERC). Interacts with DKC1; this interaction is dependent on the ability of DHX36 to bind to the G4-RNA structure present in TERC. Interacts with PARN; this interaction stimulates PARN to enhance uPA mRNA decay. Interacts with EXOSC3; this interaction occurs in a RNase-insensitive manner. Interacts with EXOSC10; this interaction occurs in a RNase-insensitive manner. Interacts with ILF3; this interaction occurs in a RNA-dependent manner. Interacts with ELAVL1; this interaction occurs in an RNA-dependent manner. Interacts with DDX5; this interaction occurs in a RNA-dependent manner. Interacts with DDX17; this interaction occurs in a RNA-dependent manner. Interacts with HDAC1; this interaction occurs in a RNA-dependent manner. Interacts with HDAC3; this interaction occurs in a RNA-dependent manner. Interacts with HDAC4. Interacts with AGO1. Interacts with AGO2. Interacts with ERCC6. Requires Mg(2+) as cofactor. As to expression, expressed in spermatogonia stem cells and primary spermatocytes (at protein level). Expressed strongly in testis. Weakly expressed in heart, lung, liver, kidney, small intestine, spleen, lymphe node and thymus.

The protein localises to the nucleus. The protein resides in the cytoplasm. It is found in the cytosol. It localises to the stress granule. Its subcellular location is the nucleus speckle. The protein localises to the chromosome. The protein resides in the telomere. It is found in the mitochondrion. It localises to the perikaryon. Its subcellular location is the cell projection. The protein localises to the dendrite. The protein resides in the axon. The enzyme catalyses ATP + H2O = ADP + phosphate + H(+). ATPase activity is enhanced in the presence of homomeric poly(U) RNAs, but not by double-stranded DNA (dsDNA), double-stranded RNA (dsRNA) and tRNA. Multifunctional ATP-dependent helicase that unwinds G-quadruplex (G4) structures. Plays a role in many biological processes such as genomic integrity, gene expression regulations and as a sensor to initiate antiviral responses. G4 structures correspond to helical structures containing guanine tetrads. Binds with high affinity to and unwinds G4 structures that are formed in nucleic acids (G4-DNA and G4-RNA). Plays a role in genomic integrity. Converts the G4-RNA structure present in telomerase RNA template component (TREC) into a double-stranded RNA to promote P1 helix formation that acts as a template boundary ensuring accurate reverse transcription. Plays a role in transcriptional regulation. Resolves G4-DNA structures in promoters of genes, such as YY1, KIT/c-kit and ALPL and positively regulates their expression. Plays a role in post-transcriptional regulation. Unwinds a G4-RNA structure located in the 3'-UTR polyadenylation site of the pre-mRNA TP53 and stimulates TP53 pre-mRNA 3'-end processing in response to ultraviolet (UV)-induced DNA damage. Binds to the precursor-microRNA-134 (pre-miR-134) terminal loop and regulates its transport into the synapto-dendritic compartment. Involved in the pre-miR-134-dependent inhibition of target gene expression and the control of dendritic spine size. Plays a role in the regulation of cytoplasmic mRNA translation and mRNA stability. Binds to both G4-RNA structures and alternative non-quadruplex-forming sequence within the 3'-UTR of the PITX1 mRNA regulating negatively PITX1 protein expression. Binds to both G4-RNA structure in the 5'-UTR and AU-rich elements (AREs) localized in the 3'-UTR of NKX2-5 mRNA to either stimulate protein translation or induce mRNA decay in an ELAVL1-dependent manner, respectively. Also binds to ARE sequences present in several mRNAs mediating exosome-mediated 3'-5' mRNA degradation. Involved in cytoplasmic urokinase-type plasminogen activator (uPA) mRNA decay. Component of a multi-helicase-TICAM1 complex that acts as a cytoplasmic sensor of viral double-stranded RNA (dsRNA) and plays a role in the activation of a cascade of antiviral responses including the induction of pro-inflammatory cytokines via the adapter molecule TICAM1. Required for the early embryonic development and hematopoiesis. Involved in the regulation of cardioblast differentiation and proliferation during heart development. Involved in spermatogonia differentiation. May play a role in ossification. The chain is ATP-dependent DNA/RNA helicase DHX36 from Mus musculus (Mouse).